A 336-amino-acid polypeptide reads, in one-letter code: Large ribosomal subunit protein uL10 (336 aa).

The disordered stretch occupies residues 292–336; that stretch reads LKEKLSSRAAAPAPEEKEEEVEEEAEEEEEEEEEDAAAGLGALFG. A compositionally biased stretch (acidic residues) spans 307–327; it reads EKEEEVEEEAEEEEEEEEEDA.

Belongs to the universal ribosomal protein uL10 family. As to quaternary structure, part of the 50S ribosomal subunit. Forms part of the ribosomal stalk which helps the ribosome interact with GTP-bound translation factors. Forms a heptameric L10(L12)2(L12)2(L12)2 complex, where L10 forms an elongated spine to which the L12 dimers bind in a sequential fashion.

Forms part of the ribosomal stalk, playing a central role in the interaction of the ribosome with GTP-bound translation factors. The polypeptide is Large ribosomal subunit protein uL10 (Methanothermobacter thermautotrophicus (strain ATCC 29096 / DSM 1053 / JCM 10044 / NBRC 100330 / Delta H) (Methanobacterium thermoautotrophicum)).